Reading from the N-terminus, the 54-residue chain is UPF0391 membrane protein Daro_2080 (54 aa).

The next 2 helical transmembrane spans lie at 5 to 25 (AIVFFIIALIAALFGFTGIAA) and 30 to 50 (IAKIMFFIFVLLALVSLVMGF).

Belongs to the UPF0391 family.

The protein localises to the cell membrane. The protein is UPF0391 membrane protein Daro_2080 of Dechloromonas aromatica (strain RCB).